We begin with the raw amino-acid sequence, 785 residues long: DNA ligase (785 aa).

NAD(+) is bound by residues 32–36, 81–82, and glutamate 121; these read DAEYD and SL. The active-site N6-AMP-lysine intermediate is the lysine 123. NAD(+) contacts are provided by arginine 144, glutamate 181, lysine 297, and lysine 321. 4 residues coordinate Zn(2+): cysteine 415, cysteine 418, cysteine 445, and cysteine 451. The BRCT domain maps to 702–785; sequence VEGLPLAGET…AFLKGHGISA (84 aa).

The protein belongs to the NAD-dependent DNA ligase family. LigA subfamily. The cofactor is Mg(2+). Requires Mn(2+) as cofactor.

The enzyme catalyses NAD(+) + (deoxyribonucleotide)n-3'-hydroxyl + 5'-phospho-(deoxyribonucleotide)m = (deoxyribonucleotide)n+m + AMP + beta-nicotinamide D-nucleotide.. In terms of biological role, DNA ligase that catalyzes the formation of phosphodiester linkages between 5'-phosphoryl and 3'-hydroxyl groups in double-stranded DNA using NAD as a coenzyme and as the energy source for the reaction. It is essential for DNA replication and repair of damaged DNA. This is DNA ligase from Pseudomonas fluorescens (strain Pf0-1).